A 248-amino-acid polypeptide reads, in one-letter code: FCS-Like Zinc finger 14 (248 aa).

A compositionally biased stretch (polar residues) spans 85-94 (VCRSEPNQPG). Residues 85–108 (VCRSEPNQPGRSDPVQFMSHGGST) are disordered. An FLZ-type zinc finger spans residues 181-224 (GFLNSCYLCRKKLHGQDIFIYRGEKAFCSTECRSSHIANDERKE).

This sequence belongs to the FLZ family. In terms of assembly, interacts with KIN10 and KIN11 via its FLZ-type zinc finger domain. Interacts with KINB1, KINB2 and KINB3 via its N-terminal part.

It is found in the cytoplasm. The protein resides in the nucleus. May act as an adapter to facilitate the interaction of SnRK1 complex with effector proteins, conferring tissue- and stimulus-type specific differences in the SnRK1 regulation pathway. This chain is FCS-Like Zinc finger 14, found in Arabidopsis thaliana (Mouse-ear cress).